Reading from the N-terminus, the 101-residue chain is Gamma-secretase subunit PEN-2 (101 aa).

Residues 1-17 (MNLERVSNEEKLNLCRK) are Cytoplasmic-facing. Residues 18–36 (YYLGGFAFLPFLWLVNIFW) constitute an intramembrane region (helical). Residues 37 to 57 (FFREAFIVPAYTEQSQIKGYV) lie on the Cytoplasmic side of the membrane. The helical transmembrane segment at 58 to 78 (WRSAVGFFLWVIVLSTWITIF) threads the bilayer. The Lumenal segment spans residues 79–101 (QIYRPRWGALGDYLSFTIPLGTP).

Belongs to the PEN-2 family. As to quaternary structure, the functional gamma-secretase complex is composed of at least four polypeptides: a presenilin homodimer (PSEN1 or PSEN2), nicastrin (NCSTN), APH1 (APH1A or APH1B) and PSENEN.

The protein localises to the endoplasmic reticulum membrane. It localises to the golgi apparatus. The protein resides in the golgi stack membrane. Its subcellular location is the cell membrane. It is found in the membrane. Functionally, essential subunit of the gamma-secretase complex, an endoprotease complex that catalyzes the intramembrane cleavage of integral membrane proteins such as Notch receptors and APP (amyloid-beta precursor protein). The gamma-secretase complex plays a role in Notch and Wnt signaling cascades and regulation of downstream processes via its role in processing key regulatory proteins, and by regulating cytosolic CTNNB1 levels. PSENEN modulates both endoproteolysis of presenilin and gamma-secretase activity. The protein is Gamma-secretase subunit PEN-2 (PSENEN) of Bos taurus (Bovine).